The sequence spans 245 residues: Exosome complex component RRP41 (245 aa).

Position 2 is an N-acetylalanine (Ala2).

The protein belongs to the RNase PH family. In terms of assembly, component of the RNA exosome core complex (Exo-9), composed of EXOSC1, EXOSC2, EXOSC3, EXOSC4, EXOSC5, EXOSC6, EXOSC7, EXOSC8 and EXOSC9; within the complex interacts with EXOSC2, EXOSC7 and EXOSC9. The catalytically inactive RNA exosome core complex (Exo-9) associates with the catalytic subunit EXOSC10/RRP6. Exo-9 may associate with DIS3 to form the nucleolar exosome complex, or DIS3L to form the cytoplasmic exosome complex. Exo-9 is formed by a hexameric base ring consisting of the heterodimers EXOSC4-EXOSC9, EXOSC5-EXOSC8 and EXOSC6-EXOSC7, and a cap ring consisting of EXOSC1, EXOSC2 and EXOSC3. The RNA exosome complex associates with cofactors C1D/RRP47, MPHOSPH6/MPP6 and MTREX/MTR4. Interacts with DDX60. Interacts with DIS3; the interaction is direct.

The protein localises to the cytoplasm. Its subcellular location is the nucleus. The protein resides in the nucleolus. It is found in the nucleoplasm. Its function is as follows. Non-catalytic component of the RNA exosome complex which has 3'-&gt;5' exoribonuclease activity and participates in a multitude of cellular RNA processing and degradation events. In the nucleus, the RNA exosome complex is involved in proper maturation of stable RNA species such as rRNA, snRNA and snoRNA, in the elimination of RNA processing by-products and non-coding 'pervasive' transcripts, such as antisense RNA species and promoter-upstream transcripts (PROMPTs), and of mRNAs with processing defects, thereby limiting or excluding their export to the cytoplasm. The RNA exosome may be involved in Ig class switch recombination (CSR) and/or Ig variable region somatic hypermutation (SHM) by targeting AICDA deamination activity to transcribed dsDNA substrates. In the cytoplasm, the RNA exosome complex is involved in general mRNA turnover and specifically degrades inherently unstable mRNAs containing AU-rich elements (AREs) within their 3' untranslated regions, and in RNA surveillance pathways, preventing translation of aberrant mRNAs. It seems to be involved in degradation of histone mRNA. The catalytic inactive RNA exosome core complex of 9 subunits (Exo-9) is proposed to play a pivotal role in the binding and presentation of RNA for ribonucleolysis, and to serve as a scaffold for the association with catalytic subunits and accessory proteins or complexes. EXOSC4 binds to ARE-containing RNAs. The sequence is that of Exosome complex component RRP41 (EXOSC4) from Bos taurus (Bovine).